The chain runs to 665 residues: DNA ligase (665 aa).

NAD(+) is bound by residues 31–35 (DQEFD), 80–81 (SL), and Glu-110. Lys-112 serves as the catalytic N6-AMP-lysine intermediate. NAD(+)-binding residues include Arg-133, Glu-170, Lys-285, and Lys-309. Zn(2+) contacts are provided by Cys-403, Cys-406, Cys-421, and Cys-427. Positions 587-665 (EHTDKLAGKS…SEEEFLQMIE (79 aa)) constitute a BRCT domain.

The protein belongs to the NAD-dependent DNA ligase family. LigA subfamily. The cofactor is Mg(2+). Requires Mn(2+) as cofactor.

The catalysed reaction is NAD(+) + (deoxyribonucleotide)n-3'-hydroxyl + 5'-phospho-(deoxyribonucleotide)m = (deoxyribonucleotide)n+m + AMP + beta-nicotinamide D-nucleotide.. Its function is as follows. DNA ligase that catalyzes the formation of phosphodiester linkages between 5'-phosphoryl and 3'-hydroxyl groups in double-stranded DNA using NAD as a coenzyme and as the energy source for the reaction. It is essential for DNA replication and repair of damaged DNA. The chain is DNA ligase from Phocaeicola vulgatus (strain ATCC 8482 / DSM 1447 / JCM 5826 / CCUG 4940 / NBRC 14291 / NCTC 11154) (Bacteroides vulgatus).